A 274-amino-acid polypeptide reads, in one-letter code: Nitrogenase iron protein (274 aa).

An ATP-binding site is contributed by 8–15; the sequence is GKGGIGKS. Cysteine 94 contributes to the [4Fe-4S] cluster binding site. Arginine 97 is modified (ADP-ribosylarginine; by dinitrogenase reductase ADP-ribosyltransferase). [4Fe-4S] cluster is bound at residue cysteine 131.

Belongs to the NifH/BchL/ChlL family. Homodimer. [4Fe-4S] cluster serves as cofactor. Post-translationally, the reversible ADP-ribosylation of Arg-97 inactivates the nitrogenase reductase and regulates nitrogenase activity.

It carries out the reaction N2 + 8 reduced [2Fe-2S]-[ferredoxin] + 16 ATP + 16 H2O = H2 + 8 oxidized [2Fe-2S]-[ferredoxin] + 2 NH4(+) + 16 ADP + 16 phosphate + 6 H(+). In terms of biological role, the key enzymatic reactions in nitrogen fixation are catalyzed by the nitrogenase complex, which has 2 components: the iron protein and the molybdenum-iron protein. This is Nitrogenase iron protein from Chlorobium phaeobacteroides (strain BS1).